Reading from the N-terminus, the 256-residue chain is 6-carboxyhexanoate--CoA ligase (256 aa).

This sequence belongs to the BioW family. Homodimer. It depends on Mg(2+) as a cofactor.

It carries out the reaction heptanedioate + ATP + CoA = 6-carboxyhexanoyl-CoA + AMP + diphosphate. The protein operates within metabolic intermediate metabolism; pimeloyl-CoA biosynthesis; pimeloyl-CoA from pimelate: step 1/1. Functionally, catalyzes the transformation of pimelate into pimeloyl-CoA with concomitant hydrolysis of ATP to AMP. This Bacillus velezensis (strain DSM 23117 / BGSC 10A6 / LMG 26770 / FZB42) (Bacillus amyloliquefaciens subsp. plantarum) protein is 6-carboxyhexanoate--CoA ligase.